The chain runs to 413 residues: Putative competence-damage inducible protein (413 aa).

This sequence belongs to the CinA family.

This chain is Putative competence-damage inducible protein, found in Desulforudis audaxviator (strain MP104C).